A 736-amino-acid chain; its full sequence is Polyribonucleotide nucleotidyltransferase (736 aa).

Mg(2+) contacts are provided by D518 and D524. The region spanning 584 to 644 (PSLQIFSINP…QKVEAAKEHI (61 aa)) is the KH domain. Residues 665–732 (GEVFKGKVKK…NKNKVELGRA (68 aa)) enclose the S1 motif domain.

It belongs to the polyribonucleotide nucleotidyltransferase family. Mg(2+) is required as a cofactor.

The protein resides in the cytoplasm. It carries out the reaction RNA(n+1) + phosphate = RNA(n) + a ribonucleoside 5'-diphosphate. In terms of biological role, involved in mRNA degradation. Catalyzes the phosphorolysis of single-stranded polyribonucleotides processively in the 3'- to 5'-direction. This Wolinella succinogenes (strain ATCC 29543 / DSM 1740 / CCUG 13145 / JCM 31913 / LMG 7466 / NCTC 11488 / FDC 602W) (Vibrio succinogenes) protein is Polyribonucleotide nucleotidyltransferase.